Reading from the N-terminus, the 465-residue chain is Protein unc-93 homolog A (465 aa).

A run of 5 helical transmembrane segments spans residues 8–28 (VLVV…LQSL), 40–60 (VISL…LPPI), 71–91 (IVVS…PGWA), 96–118 (TSAI…LTIS), and 140–160 (IFFF…SLIF). N-linked (GlcNAc...) asparagine glycosylation is found at N183 and N189. Residues 200–220 (TLLGCYIGVGLLAIIFVAVFL) form a helical membrane-spanning segment. N-linked (GlcNAc...) asparagine glycosylation is present at N237. A run of 5 helical transmembrane segments spans residues 256-276 (LLLL…LSGE), 281-301 (YVTC…FAAS), 319-339 (IALF…LLYW), 343-363 (PDQL…DAVW), and 410-427 (IYIA…YLYV).

It belongs to the unc-93 family.

Its subcellular location is the membrane. The chain is Protein unc-93 homolog A (unc93a) from Danio rerio (Zebrafish).